The chain runs to 1293 residues: Phosphoribosylformylglycinamidine synthase (1293 aa).

ATP-binding positions include 305–316 and Ala-676; that span reads GAATGSGGEIRD. Residues 305–328 form a disordered region; sequence GAATGSGGEIRDEGATGRGSKPKA. Mg(2+) is bound by residues Asp-677, Glu-716, Asn-720, and Asp-884. Ser-886 is an ATP binding site. Residues 1040–1293 form the Glutamine amidotransferase type-1 domain; sequence MAILREQGVN…MFRNARVNLG (254 aa). The active-site Nucleophile is Cys-1133. Residues His-1258 and Glu-1260 contribute to the active site.

The protein in the N-terminal section; belongs to the FGAMS family. In terms of assembly, monomer.

The protein localises to the cytoplasm. It catalyses the reaction N(2)-formyl-N(1)-(5-phospho-beta-D-ribosyl)glycinamide + L-glutamine + ATP + H2O = 2-formamido-N(1)-(5-O-phospho-beta-D-ribosyl)acetamidine + L-glutamate + ADP + phosphate + H(+). It participates in purine metabolism; IMP biosynthesis via de novo pathway; 5-amino-1-(5-phospho-D-ribosyl)imidazole from N(2)-formyl-N(1)-(5-phospho-D-ribosyl)glycinamide: step 1/2. Functionally, phosphoribosylformylglycinamidine synthase involved in the purines biosynthetic pathway. Catalyzes the ATP-dependent conversion of formylglycinamide ribonucleotide (FGAR) and glutamine to yield formylglycinamidine ribonucleotide (FGAM) and glutamate. The chain is Phosphoribosylformylglycinamidine synthase from Shewanella sp. (strain MR-7).